The sequence spans 223 residues: MTIAKMIDHTALKPDTTKEQILTLTKEAREYGFASVCVNPTWVKLSAEQLSGAESVVCTVIGFPLGANTPEVKAFEVKNAIENGAKEVDMVINIGALKDKDDELVERDIRAVVDAAKGKALVKVIIETCLLTDEEKVRACEIAVKAGTDFVKTSTGFSTGGATAEDIALMRKTVGPNIGVKASGGVRTKEDVEKMIEAGATRIGASAGVAIVSGEKPAKPDNY.

Asp89 functions as the Proton donor/acceptor in the catalytic mechanism. Catalysis depends on Lys152, which acts as the Schiff-base intermediate with acetaldehyde. Lys181 (proton donor/acceptor) is an active-site residue.

This sequence belongs to the DeoC/FbaB aldolase family. DeoC type 1 subfamily.

It is found in the cytoplasm. It carries out the reaction 2-deoxy-D-ribose 5-phosphate = D-glyceraldehyde 3-phosphate + acetaldehyde. It participates in carbohydrate degradation; 2-deoxy-D-ribose 1-phosphate degradation; D-glyceraldehyde 3-phosphate and acetaldehyde from 2-deoxy-alpha-D-ribose 1-phosphate: step 2/2. Catalyzes a reversible aldol reaction between acetaldehyde and D-glyceraldehyde 3-phosphate to generate 2-deoxy-D-ribose 5-phosphate. This Listeria innocua serovar 6a (strain ATCC BAA-680 / CLIP 11262) protein is Deoxyribose-phosphate aldolase.